The primary structure comprises 2469 residues: Large tegument protein deneddylase (2469 aa).

The segment at 1-237 (MDIHPLFKKL…LHGPNIDLTS (237 aa)) is deubiquitination activity. In terms of domain architecture, Peptidase C76 spans 13–225 (EGIASTHQAD…IMNHYRVINY (213 aa)). Active-site residues include cysteine 33, aspartate 163, and histidine 165. Disordered stretches follow at residues 244–318 (EISP…ALTP) and 346–377 (HPVE…DDDN). Over residues 260–271 (PKTPRTPKPATP) the composition is skewed to pro residues. Serine 286 is a region of interest (interaction with inner tegument protein). Residues 295–309 (KPPKIPKTSKKSKKV) are compositionally biased toward basic residues. The segment covering 352-365 (TPGTDSLLSGINST) has biased composition (polar residues).

Belongs to the herpesviridae large tegument protein family. As to quaternary structure, interacts with host CUL1 and CUL4A; these interactions inhibit the E3 ligase activity of cullins. Interacts with inner tegument protein. Interacts with capsid vertex specific component CVC2. Interacts with the major capsid protein/MCP.

The protein resides in the virion tegument. It is found in the host cytoplasm. The protein localises to the host nucleus. It carries out the reaction Thiol-dependent hydrolysis of ester, thioester, amide, peptide and isopeptide bonds formed by the C-terminal Gly of ubiquitin (a 76-residue protein attached to proteins as an intracellular targeting signal).. Functionally, large tegument protein that plays multiple roles in the viral cycle. During viral entry, remains associated with the capsid while most of the tegument is detached and participates in the capsid transport toward the host nucleus. Plays a role in the routing of the capsid at the nuclear pore complex and subsequent uncoating. Within the host nucleus, acts as a deneddylase and promotes the degradation of nuclear CRLs (cullin-RING ubiquitin ligases) and thereby stabilizes nuclear CRL substrates, while cytoplasmic CRLs remain unaffected. These modifications prevent host cell cycle S-phase progression and create a favorable environment allowing efficient viral genome replication. Participates later in the secondary envelopment of capsids. Indeed, plays a linker role for the association of the outer viral tegument to the capsids together with the inner tegument protein. In Saimiriine herpesvirus 2 (strain 11) (SaHV-2), this protein is Large tegument protein deneddylase (64).